The chain runs to 911 residues: Valine--tRNA ligase (911 aa).

The short motif at 57–67 (PTVSGSLHVGH) is the 'HIGH' region element. A 'KMSKS' region motif is present at residues 599–603 (KMSKS). K602 is a binding site for ATP. The segment at 882-911 (EESAAEDAPETEVAVEASELGEPPAKKPKH) is disordered.

Belongs to the class-I aminoacyl-tRNA synthetase family. ValS type 2 subfamily. As to quaternary structure, monomer.

It localises to the cytoplasm. The catalysed reaction is tRNA(Val) + L-valine + ATP = L-valyl-tRNA(Val) + AMP + diphosphate. In terms of biological role, catalyzes the attachment of valine to tRNA(Val). As ValRS can inadvertently accommodate and process structurally similar amino acids such as threonine, to avoid such errors, it has a 'posttransfer' editing activity that hydrolyzes mischarged Thr-tRNA(Val) in a tRNA-dependent manner. The protein is Valine--tRNA ligase of Bifidobacterium longum (strain DJO10A).